The chain runs to 97 residues: Mapk-regulated corepressor-interacting protein 1 (97 aa).

Residues 1-30 (MTSSPVSRVVYNGKRNSSHRSPPNSSEIFT) form a disordered region. Ser-21 is subject to Phosphoserine. Thr-30 is modified (phosphothreonine). At Tyr-41 the chain carries Phosphotyrosine. A disordered region spans residues 77–97 (TFRPIDLSDLKRRNTQDAKKS). The short motif at 80–84 (PIDLS) is the PXDLS motif element. The segment covering 82–97 (DLSDLKRRNTQDAKKS) has biased composition (basic and acidic residues).

Belongs to the MCRIP family. As to quaternary structure, interacts (unphosphorylated form, via the PXDLS motif) with CTBP1, competitively inhibiting CTBP-ZEB1 interaction. Interacts with CTBP2. Interacts with MCRIP2. Interacts with DDX6. In terms of processing, phosphorylation by MAPK3/1 (ERK1/2) regulates MCRIP1 binding to CTBP(s).

It localises to the nucleus. The protein localises to the cytoplasm. Its subcellular location is the stress granule. Its function is as follows. The phosphorylation status of MCRIP1 functions as a molecular switch to regulate epithelial-mesenchymal transition. Unphosphorylated MCRIP1 binds to and inhibits the transcriptional corepressor CTBP(s). When phosphorylated by MAPK/ERK, MCRIP1 releases CTBP(s) resulting in transcriptional silencing of the E-cadherin gene and induction of epithelial-mesenchymal transition. The sequence is that of Mapk-regulated corepressor-interacting protein 1 (MCRIP1) from Bos taurus (Bovine).